We begin with the raw amino-acid sequence, 364 residues long: tRNA 2-selenouridine synthase (364 aa).

The Rhodanese domain occupies 14–137 (LLADTPLIDV…LRQTAIQATW (124 aa)). The S-selanylcysteine intermediate role is filled by cysteine 97.

Belongs to the SelU family. Monomer.

It catalyses the reaction 5-methylaminomethyl-2-thiouridine(34) in tRNA + selenophosphate + (2E)-geranyl diphosphate + H2O + H(+) = 5-methylaminomethyl-2-selenouridine(34) in tRNA + (2E)-thiogeraniol + phosphate + diphosphate. It carries out the reaction 5-methylaminomethyl-2-thiouridine(34) in tRNA + (2E)-geranyl diphosphate = 5-methylaminomethyl-S-(2E)-geranyl-thiouridine(34) in tRNA + diphosphate. The catalysed reaction is 5-methylaminomethyl-S-(2E)-geranyl-thiouridine(34) in tRNA + selenophosphate + H(+) = 5-methylaminomethyl-2-(Se-phospho)selenouridine(34) in tRNA + (2E)-thiogeraniol. The enzyme catalyses 5-methylaminomethyl-2-(Se-phospho)selenouridine(34) in tRNA + H2O = 5-methylaminomethyl-2-selenouridine(34) in tRNA + phosphate. In terms of biological role, involved in the post-transcriptional modification of the uridine at the wobble position (U34) of tRNA(Lys), tRNA(Glu) and tRNA(Gln). Catalyzes the conversion of 2-thiouridine (S2U-RNA) to 2-selenouridine (Se2U-RNA). Acts in a two-step process involving geranylation of 2-thiouridine (S2U) to S-geranyl-2-thiouridine (geS2U) and subsequent selenation of the latter derivative to 2-selenouridine (Se2U) in the tRNA chain. The polypeptide is tRNA 2-selenouridine synthase (Salmonella enteritidis PT4 (strain P125109)).